Reading from the N-terminus, the 253-residue chain is Sulfate transporter CysZ (253 aa).

4 helical membrane-spanning segments follow: residues Phe-31–Phe-51, Leu-75–Ile-95, Ile-151–Trp-171, and Ile-222–Val-242.

Belongs to the CysZ family.

The protein localises to the cell inner membrane. Functionally, high affinity, high specificity proton-dependent sulfate transporter, which mediates sulfate uptake. Provides the sulfur source for the cysteine synthesis pathway. The sequence is that of Sulfate transporter CysZ from Shigella flexneri.